We begin with the raw amino-acid sequence, 184 residues long: Elongation factor P (184 aa).

Belongs to the elongation factor P family.

The protein localises to the cytoplasm. It participates in protein biosynthesis; polypeptide chain elongation. Functionally, involved in peptide bond synthesis. Stimulates efficient translation and peptide-bond synthesis on native or reconstituted 70S ribosomes in vitro. Probably functions indirectly by altering the affinity of the ribosome for aminoacyl-tRNA, thus increasing their reactivity as acceptors for peptidyl transferase. This is Elongation factor P from Leptothrix cholodnii (strain ATCC 51168 / LMG 8142 / SP-6) (Leptothrix discophora (strain SP-6)).